Consider the following 1487-residue polypeptide: Major viral transcription factor (1487 aa).

3 disordered regions span residues 41-295 (AAPD…LPPG), 310-370 (LAKT…AEEA), and 803-1007 (PPTR…HTPR). Residues 66 to 75 (VIPPPSPTPE) show a composition bias toward pro residues. Composition is skewed to low complexity over residues 165 to 193 (PSSASPGGGSPAPRVRSISISSSSSSSSS) and 201 to 213 (DGAGASSSSSSSS). The segment covering 214–224 (DDSDSDEGGEE) has biased composition (acidic residues). The span at 235–272 (AAKTPSAAGSPGPSSGGDRPAAGAATPKSCRSGAASPG) shows a compositional bias: low complexity. Residues 273–285 (APAPAPASAPAPS) show a composition bias toward pro residues. Composition is skewed to low complexity over residues 807 to 829 (SQQPSSSSPGGEPFSGSAAAEGS), 849 to 860 (PSSHSQSPQHSQ), and 867 to 877 (ATTATCCRATQ). Residues 878–893 (TNARSRGQQHQPQKAR) are compositionally biased toward polar residues. Over residues 920–929 (HGRPRGKSGK) the composition is skewed to basic residues. Over residues 938–951 (AAQAGASASFSSSA) the composition is skewed to low complexity. A compositionally biased stretch (basic and acidic residues) spans 988 to 1007 (GPDRRGGFRRVPRGDCHTPR).

The protein belongs to the herpesviridae ICP4 family. Post-translationally, a long stretch of serine residues may be a major site of phosphorylation.

It is found in the host nucleus. Its function is as follows. This IE protein is a multifunctional protein capable of migrating to the nucleus, binding to DNA, trans-activating other viral genes, and autoregulating its own synthesis. The sequence is that of Major viral transcription factor (IE) from Equine herpesvirus 1 (strain Ab4p) (EHV-1).